Here is a 650-residue protein sequence, read N- to C-terminus: Acetyl-coenzyme A synthetase (650 aa).

CoA-binding positions include R191 to R194, T311, and N335. ATP is bound by residues G387–P389, D411–T416, D500, and R515. S523 contacts CoA. ATP is bound at residue R526. Residues V537, H539, and V542 each contribute to the Mg(2+) site. R584 lines the CoA pocket. Residue K609 is modified to N6-acetyllysine.

This sequence belongs to the ATP-dependent AMP-binding enzyme family. Requires Mg(2+) as cofactor. Post-translationally, acetylated. Deacetylation by the SIR2-homolog deacetylase activates the enzyme.

The enzyme catalyses acetate + ATP + CoA = acetyl-CoA + AMP + diphosphate. Its function is as follows. Catalyzes the conversion of acetate into acetyl-CoA (AcCoA), an essential intermediate at the junction of anabolic and catabolic pathways. AcsA undergoes a two-step reaction. In the first half reaction, AcsA combines acetate with ATP to form acetyl-adenylate (AcAMP) intermediate. In the second half reaction, it can then transfer the acetyl group from AcAMP to the sulfhydryl group of CoA, forming the product AcCoA. The chain is Acetyl-coenzyme A synthetase from Shewanella sp. (strain MR-7).